A 1416-amino-acid polypeptide reads, in one-letter code: DNA-directed RNA polymerase subunit beta' (1416 aa).

The Zn(2+) site is built by Cys-68, Cys-70, Cys-83, and Cys-86. The Mg(2+) site is built by Asp-458, Asp-460, and Asp-462. Zn(2+) is bound by residues Cys-811, Cys-884, Cys-891, and Cys-894.

Belongs to the RNA polymerase beta' chain family. In terms of assembly, the RNAP catalytic core consists of 2 alpha, 1 beta, 1 beta' and 1 omega subunit. When a sigma factor is associated with the core the holoenzyme is formed, which can initiate transcription. The cofactor is Mg(2+). Zn(2+) serves as cofactor.

The catalysed reaction is RNA(n) + a ribonucleoside 5'-triphosphate = RNA(n+1) + diphosphate. In terms of biological role, DNA-dependent RNA polymerase catalyzes the transcription of DNA into RNA using the four ribonucleoside triphosphates as substrates. The chain is DNA-directed RNA polymerase subunit beta' from Francisella philomiragia subsp. philomiragia (strain ATCC 25017 / CCUG 19701 / FSC 153 / O#319-036).